A 990-amino-acid chain; its full sequence is Protein SUPPRESSOR OF MAX2 1 (990 aa).

A Clp R domain is found at 8–167 (IQQTLTPEAA…KATIEQSLNN (160 aa)). 2 repeat regions span residues 12–83 (LTPE…LERL) and 96–167 (ISNA…SLNN). A disordered region spans residues 818 to 855 (PKKEHGSGLSFDLNQAADTDDGSHNTSDLTTDNDQDEQ). The EAR motif lies at 828–832 (FDLNQ).

It belongs to the ClpA/ClpB family. In terms of assembly, interacts probably with TPL/TPR in an EAR-motif dependent manner. Interacts with TPL, TPR1, TPR2 and TPR4. Highly expressed in dry seeds. Expressed in seedlings, rosette leaves and senescing leaves. Detected in roots and axillary shoots. Expressed in the primary rosette buds and expanding leaves of adult rosettes, the vasculature of the hypocotyls, cotyledons, and mature roots, in the midvein and petioles of young leaves, the young leaf periphery, stomata, and the root caps.

Probable component of a transcriptional corepressor complex that acts downstream of MAX2 to negatively regulate karrikins/strigolactone responses. Probable target of MAX2 during germination and seedling photomorphogenesis. Acts probably specifically in the karrikin pathway. The polypeptide is Protein SUPPRESSOR OF MAX2 1 (Arabidopsis thaliana (Mouse-ear cress)).